Here is a 78-residue protein sequence, read N- to C-terminus: U23-theraphotoxin-Cg1a 1 (78 aa).

Residues 1-21 (MKTSVLVTVLGLAVISVLCSA) form the signal peptide. Residues 22–49 (SQDEEQDMYDELLSAVFEVNDELQSEAR) constitute a propeptide that is removed on maturation. Disulfide bonds link C50–C64, C57–C69, and C63–C75.

It belongs to the neurotoxin 10 (Hwtx-1) family. 64 (Jztx-20) subfamily. As to expression, expressed by the venom gland.

It is found in the secreted. Its function is as follows. Probable ion channel inhibitor. The sequence is that of U23-theraphotoxin-Cg1a 1 from Chilobrachys guangxiensis (Chinese earth tiger tarantula).